Here is a 971-residue protein sequence, read N- to C-terminus: Nuclear factor NF-kappa-B p110 subunit (971 aa).

Residues 23–41 (STSGYSSSTSPNSTNRSFS) are compositionally biased toward low complexity. A disordered region spans residues 23-46 (STSGYSSSTSPNSTNRSFSPAHSP). The 193-residue stretch at 147 to 339 (KHVPQLRIVE…NAINNRKSAQ (193 aa)) folds into the RHD domain. A Phosphoserine; by PKA modification is found at S431. Residues 452–457 (SRKRRR) carry the Nuclear localization signal motif. Residues 453-496 (RKRRRTGSSANSSSSGTESSNNSLDLPKTLGLAQPPNGLPNLSQ) form a disordered region. Positions 460-475 (SSANSSSSGTESSNNS) are enriched in low complexity. T620 carries the phosphothreonine modification. Phosphotyrosine is present on Y626. ANK repeat units follow at residues 640 to 669 (DGDSALHVACQQDRAHYIRPLLGMGCNPNL), 673 to 702 (AGNTPLHVAVKEEHLSCVESFLNGVPTVQL), 710 to 740 (DGLTPLHMAIRQNKYDVAKKLISYDRTSISV), 745 to 775 (DGNNALHMAVLEQSVELLVLILDAQNENLTD), and 783 to 812 (AGHTPLELAERKANDRVVQLLKNVYPEKGE). The interval 826–877 (IDSSSDESSDAGQLEIKSEEMDIETKDEDSVELDLSSGPRRQKDESSRDTEM) is disordered. The segment covering 866–877 (RQKDESSRDTEM) has biased composition (basic and acidic residues). Phosphoserine is present on S950.

Rel-p68 subunit interacts with Dredd. Interacts with DMAP1. Interacts with akirin; interaction is immune stimulation-dependent; activates selected rel target gene promoters. Phosphorylated by lipopolysaccharide (LPS)-activated I-kappa-B kinase complex before being cleaved. Rel-p110 subunit is cleaved within seconds of an immune challenge into Rel-p49 subunit and Rel-p68 subunit. Rel-p110 subunit reappears after 45 minutes.

The protein resides in the nucleus. The protein localises to the cytoplasm. In terms of biological role, transcription factor that plays a key role in the humoral immune response as part of the peptidoglycan recognition protein (IMD) signaling pathway. Rel-p68 subunit translocates to the nucleus where it binds to the promoter of the Cecropin A1 gene and probably other antimicrobial peptide genes. I-kappa-B kinase complex (IKKbeta and key) and PGRP-LC are essential signaling components in transmitting the lipopolysaccharide (LPS) signal leading to cact degradation for NF-kappa-B (rel) activation. Part of a Toll-related receptor pathway that functions in the apoptosis of unfit cells during cell competition. Also part of some antiviral immunity: activated downstream of Sting signaling, which detects double-stranded RNA (dsRNA) from viruses, and promotes expression of antiviral effector genes. May be part of a NF-kappa-B and Tollo signaling cascade that regulates development of the peripheral nervous system. Possibly post-transcriptionally regulates the neuron-specific genes sc and ase, by promoting the rapid turnover of their transcripts in the wing imaginal disk. This is Nuclear factor NF-kappa-B p110 subunit from Drosophila melanogaster (Fruit fly).